Here is a 280-residue protein sequence, read N- to C-terminus: MNGAAYLSIIRPVNAVVAGLAGILASIIATGSIPAEFFWIFCIVLTITGAGNVINDYYDKEIDAINQPDRPIPSGQIIPGHALMYAILLFLIGNGIAILFTPLPLAGIAMGNSVILWLYASFLKKTPLIGNISVSYLAASIFLFGGAIQGTQGIISVFPIAGATWGVMLARELIKDAEDMPGDNEHGARTFPLLYGIRATIYLALISATAGVLMSLLLYSRWGAFYLGAIILVDAIILFGAIRGMKATNSEEMIKAKSSKILKAGMFASLLVFLLSAVLL.

9 consecutive transmembrane segments (helical) span residues 4-24, 27-47, 83-103, 104-124, 128-148, 150-170, 199-219, 222-242, and 260-280; these read AAYLSIIRPVNAVVAGLAGIL, IIATGSIPAEFFWIFCIVLTI, LMYAILLFLIGNGIAILFTPL, PLAGIAMGNSVILWLYASFLK, LIGNISVSYLAASIFLFGGAI, GTQGIISVFPIAGATWGVMLA, ATIYLALISATAGVLMSLLLY, WGAFYLGAIILVDAIILFGAI, and KILKAGMFASLLVFLLSAVLL.

Belongs to the UbiA prenyltransferase family. DGGGP synthase subfamily. Mg(2+) is required as a cofactor.

It localises to the cell membrane. It carries out the reaction sn-3-O-(geranylgeranyl)glycerol 1-phosphate + (2E,6E,10E)-geranylgeranyl diphosphate = 2,3-bis-O-(geranylgeranyl)-sn-glycerol 1-phosphate + diphosphate. It participates in membrane lipid metabolism; glycerophospholipid metabolism. Prenyltransferase that catalyzes the transfer of the geranylgeranyl moiety of geranylgeranyl diphosphate (GGPP) to the C2 hydroxyl of (S)-3-O-geranylgeranylglyceryl phosphate (GGGP). This reaction is the second ether-bond-formation step in the biosynthesis of archaeal membrane lipids. This is Digeranylgeranylglyceryl phosphate synthase from Methanospirillum hungatei JF-1 (strain ATCC 27890 / DSM 864 / NBRC 100397 / JF-1).